The following is a 692-amino-acid chain: uncharacterized protein (692 aa).

Response regulatory domains lie at 9–130 and 139–255; these read RVLY…LRMC and RILI…EYRM. 4-aspartylphosphate occurs at positions 58 and 188. A GGDEF domain is found at 299-432; it reads GVHGLVIIDV…GGNQAHVWSA (134 aa). In terms of domain architecture, EAL spans 443 to 691; it reads ESVIKRLVST…SFDFQHMSHD (249 aa).

This is an uncharacterized protein from Thiocystis violacea.